A 160-amino-acid polypeptide reads, in one-letter code: Transcriptional repressor NrdR (160 aa).

A compositionally biased stretch (polar residues) spans 1-11; it reads MRCPSCSSLDT. Positions 1–20 are disordered; sequence MRCPSCSSLDTQVKDSRPTE. Residues 3-34 fold into a zinc finger; sequence CPSCSSLDTQVKDSRPTEDSSVIRRRRVCLAC. The 91-residue stretch at 49 to 139 folds into the ATP-cone domain; sequence LTVIKRNGRR…VYRNFREAKD (91 aa).

Belongs to the NrdR family. Zn(2+) serves as cofactor.

Negatively regulates transcription of bacterial ribonucleotide reductase nrd genes and operons by binding to NrdR-boxes. In Rhodopseudomonas palustris (strain BisA53), this protein is Transcriptional repressor NrdR.